Consider the following 505-residue polypeptide: Glycerol kinase (505 aa).

Threonine 14 is an ADP binding site. Residues threonine 14, threonine 15, and serine 16 each coordinate ATP. Sn-glycerol 3-phosphate is bound at residue threonine 14. Residue arginine 18 participates in ADP binding. Arginine 84, glutamate 85, tyrosine 136, and aspartate 246 together coordinate sn-glycerol 3-phosphate. Residues arginine 84, glutamate 85, tyrosine 136, aspartate 246, and glutamine 247 each coordinate glycerol. Threonine 268 and glycine 311 together coordinate ADP. Residues threonine 268, glycine 311, glutamine 315, and glycine 412 each contribute to the ATP site. ADP is bound by residues glycine 412 and asparagine 416.

This sequence belongs to the FGGY kinase family.

The catalysed reaction is glycerol + ATP = sn-glycerol 3-phosphate + ADP + H(+). Its pathway is polyol metabolism; glycerol degradation via glycerol kinase pathway; sn-glycerol 3-phosphate from glycerol: step 1/1. Inhibited by fructose 1,6-bisphosphate (FBP). Key enzyme in the regulation of glycerol uptake and metabolism. Catalyzes the phosphorylation of glycerol to yield sn-glycerol 3-phosphate. The chain is Glycerol kinase from Vibrio campbellii (strain ATCC BAA-1116).